Reading from the N-terminus, the 477-residue chain is Asparaginyl-tRNA synthetase (477 aa).

Residues Met1–Cys14 constitute a mitochondrion transit peptide. Lys353 is modified (N6-acetyllysine).

Belongs to the class-II aminoacyl-tRNA synthetase family. Homodimer. In terms of tissue distribution, expressed in brain and inner ear, including the cochlear epithelium and organ of Corti.

The protein resides in the mitochondrion matrix. Its subcellular location is the mitochondrion. The catalysed reaction is tRNA(Asn) + L-asparagine + ATP = L-asparaginyl-tRNA(Asn) + AMP + diphosphate + H(+). Its function is as follows. Mitochondrial aminoacyl-tRNA synthetase that catalyzes the specific attachment of the asparagine amino acid (aa) to the homologous transfer RNA (tRNA), further participating in protein synthesis. The reaction occurs in a two steps: asparagine is first activated by ATP to form Asn-AMP and then transferred to the acceptor end of tRNA(Asn). The protein is Asparaginyl-tRNA synthetase of Mus musculus (Mouse).